Here is a 560-residue protein sequence, read N- to C-terminus: MNNNIMNLIAAIVLSLSIIFGWQYFVVKPEHKKQQQQIAMQKAENLKKQKLKALIKPASDLVVQEANQVQRIKIESESLTGSISLKGLRFDDLILKKYKQDLSKNSTEVRLFSPANTENAYFAEIGLVSNLSSVKLPNNDTIWNSDGEILSPEKPVNLFWVNEDGVKFLVTITLDENYLFTVEQTIVNNSDKELPVQSYGLINRKYIAVEKAVNILHQGPIGCINENLKEYSYDDIKDKKSEKFVASKVDWIGMTDKYWLSSLIPDKSSNYSSNFNYALTQGVERYQVDFISPVQIIKSGENFSITSRIFAGAKKVDLLDKYEKQYGIKLFDRAIDFGWFYIITKPVFYAMNFFYGYVGNFGISILIVTVIIKLLMFTLANKSYCSMKKMKNLQPEIDRIKNLYGDDKARLNQEIMALYKKEKVNPVAGCLPILVQIPVFFSIYKVLYVTIEMRQAPFYGWIKDLSAPDPTTIFNLFGFLPFSPPSFLMIGAWPILMAITMFLQQRMSPEPADPVQAQVMKFMPLIFLVMFSSFPVGLLIYWSWNNILSIIQQYYINKFN.

6 helical membrane passes run 7–27, 334–354, 357–377, 431–451, 476–496, and 522–542; these read NLIA…YFVV, AIDF…MNFF, YVGN…LLMF, LPIL…YVTI, LFGF…WPIL, and FMPL…LIYW.

Belongs to the OXA1/ALB3/YidC family. Type 1 subfamily. Interacts with the Sec translocase complex via SecD. Specifically interacts with transmembrane segments of nascent integral membrane proteins during membrane integration.

The protein resides in the cell inner membrane. Functionally, required for the insertion and/or proper folding and/or complex formation of integral membrane proteins into the membrane. Involved in integration of membrane proteins that insert both dependently and independently of the Sec translocase complex, as well as at least some lipoproteins. Aids folding of multispanning membrane proteins. The chain is Membrane protein insertase YidC from Rickettsia canadensis (strain McKiel).